The following is a 266-amino-acid chain: MWYTTVRNPSIALIKQGYHILAEYNLVKEELKNIYAIPSYACGLHWFGVIFVHSGIYAGSVFRFSILLPDNFPADISLPTVVFSSAVLHPHICPQNKTLDLAHFLNEWRKDEHHIWHVLRYIQSIFADAEGSICTGQSSSGDLVVMDEVRNMDALNILVKSRPEYIERVQEQAILSRNLIYDRPPTEDPHYIIVEPYCAERHLKFMDQLKSPCWKEATSMDCSQPSEYLGHIDSSRQMDEEETNQLEKLHRGRIPEPQREEAEVSL.

The region spanning 15-178 (KQGYHILAEY…VQEQAILSRN (164 aa)) is the UBC core domain. Residues 226–266 (SEYLGHIDSSRQMDEEETNQLEKLHRGRIPEPQREEAEVSL) are disordered. The span at 245–266 (QLEKLHRGRIPEPQREEAEVSL) shows a compositional bias: basic and acidic residues.

The protein belongs to the ubiquitin-conjugating enzyme family. FTS subfamily.

The polypeptide is Protein crossbronx-like (Drosophila sechellia (Fruit fly)).